A 184-amino-acid polypeptide reads, in one-letter code: ATP-dependent protease subunit HslV (184 aa).

Residue threonine 12 is part of the active site. Na(+) is bound by residues alanine 166, cysteine 169, and threonine 172.

This sequence belongs to the peptidase T1B family. HslV subfamily. In terms of assembly, a double ring-shaped homohexamer of HslV is capped on each side by a ring-shaped HslU homohexamer. The assembly of the HslU/HslV complex is dependent on binding of ATP.

It localises to the cytoplasm. It catalyses the reaction ATP-dependent cleavage of peptide bonds with broad specificity.. Its activity is regulated as follows. Allosterically activated by HslU binding. Its function is as follows. Protease subunit of a proteasome-like degradation complex believed to be a general protein degrading machinery. This is ATP-dependent protease subunit HslV from Nitrobacter winogradskyi (strain ATCC 25391 / DSM 10237 / CIP 104748 / NCIMB 11846 / Nb-255).